The following is a 243-amino-acid chain: DNA repair protein RecO (243 aa).

It belongs to the RecO family.

Its function is as follows. Involved in DNA repair and RecF pathway recombination. The polypeptide is DNA repair protein RecO (Xylella fastidiosa (strain M12)).